We begin with the raw amino-acid sequence, 197 residues long: MAERKASVERDTLETQIKASINLDGTGKARFDIGVPFLEHMLDQIARHGLIDLDIESKGDLHIDDHHTVEDVGITLGQAFSKAIGDKKGIRRYGHAYVPLDEALSRVVIDFSGRPGLQMHVPFTRATVGGFDVDLFQEFFQGFVNHANVTLHIDTLRGTNTHHQIETVFKAFGRALRMAVELDERMAGQMPSTKGVL.

This sequence belongs to the imidazoleglycerol-phosphate dehydratase family.

Its subcellular location is the cytoplasm. It carries out the reaction D-erythro-1-(imidazol-4-yl)glycerol 3-phosphate = 3-(imidazol-4-yl)-2-oxopropyl phosphate + H2O. Its pathway is amino-acid biosynthesis; L-histidine biosynthesis; L-histidine from 5-phospho-alpha-D-ribose 1-diphosphate: step 6/9. This is Imidazoleglycerol-phosphate dehydratase from Pseudomonas fluorescens (strain ATCC BAA-477 / NRRL B-23932 / Pf-5).